Here is a 286-residue protein sequence, read N- to C-terminus: Pyridoxal kinase PdxY (286 aa).

Residues serine 9 and 44-45 (MQ) each bind substrate. ATP contacts are provided by aspartate 111, glutamate 147, and lysine 180. Residue aspartate 221 participates in substrate binding.

This sequence belongs to the pyridoxine kinase family. PdxY subfamily. As to quaternary structure, homodimer. Mg(2+) is required as a cofactor.

The enzyme catalyses pyridoxal + ATP = pyridoxal 5'-phosphate + ADP + H(+). The protein operates within cofactor metabolism; pyridoxal 5'-phosphate salvage; pyridoxal 5'-phosphate from pyridoxal: step 1/1. Pyridoxal kinase involved in the salvage pathway of pyridoxal 5'-phosphate (PLP). Catalyzes the phosphorylation of pyridoxal to PLP. The sequence is that of Pyridoxal kinase PdxY from Burkholderia orbicola (strain AU 1054).